The following is a 176-amino-acid chain: Large ribosomal subunit protein uL10 (176 aa).

It belongs to the universal ribosomal protein uL10 family. As to quaternary structure, part of the ribosomal stalk of the 50S ribosomal subunit. The N-terminus interacts with L11 and the large rRNA to form the base of the stalk. The C-terminus forms an elongated spine to which L12 dimers bind in a sequential fashion forming a multimeric L10(L12)X complex.

Its function is as follows. Forms part of the ribosomal stalk, playing a central role in the interaction of the ribosome with GTP-bound translation factors. This chain is Large ribosomal subunit protein uL10 (rplJ), found in Streptomyces coelicolor (strain ATCC BAA-471 / A3(2) / M145).